Here is a 229-residue protein sequence, read N- to C-terminus: Peptidase E (229 aa).

Active-site charge relay system residues include serine 120, aspartate 135, and histidine 157.

Belongs to the peptidase S51 family.

The protein localises to the cytoplasm. It carries out the reaction Dipeptidase E catalyzes the hydrolysis of dipeptides Asp-|-Xaa. It does not act on peptides with N-terminal Glu, Asn or Gln, nor does it cleave isoaspartyl peptides.. Hydrolyzes dipeptides containing N-terminal aspartate residues. May play a role in allowing the cell to use peptide aspartate to spare carbon otherwise required for the synthesis of the aspartate family of amino acids. This Salmonella typhimurium (strain LT2 / SGSC1412 / ATCC 700720) protein is Peptidase E (pepE).